The chain runs to 487 residues: Glutamyl-tRNA(Gln) amidotransferase subunit A (487 aa).

Residues K79 and S158 each act as charge relay system in the active site. S182 serves as the catalytic Acyl-ester intermediate.

The protein belongs to the amidase family. GatA subfamily. In terms of assembly, heterotrimer of A, B and C subunits.

The catalysed reaction is L-glutamyl-tRNA(Gln) + L-glutamine + ATP + H2O = L-glutaminyl-tRNA(Gln) + L-glutamate + ADP + phosphate + H(+). Its function is as follows. Allows the formation of correctly charged Gln-tRNA(Gln) through the transamidation of misacylated Glu-tRNA(Gln) in organisms which lack glutaminyl-tRNA synthetase. The reaction takes place in the presence of glutamine and ATP through an activated gamma-phospho-Glu-tRNA(Gln). This chain is Glutamyl-tRNA(Gln) amidotransferase subunit A, found in Ehrlichia canis (strain Jake).